The primary structure comprises 1007 residues: Aldehyde reductase lnbA (1007 aa).

The tract at residues 35 to 428 is adenylation (A) domain; sequence QVRQSPSSIA…GRVDHQIKVR (394 aa). Positions 540–617 constitute a Carrier domain; it reads TLCQDTQTVL…ALASIIDHAK (78 aa). An O-(pantetheine 4'-phosphoryl)serine modification is found at Ser-577. Positions 659–998 are short-chain dehydrogenase/reductase (R) domain; sequence IFITGATGFV…PTLDCSLLKK (340 aa).

It belongs to the NRP synthetase family.

The enzyme catalyses L-tyrosinal + AMP + diphosphate + NADP(+) = L-tyrosine + ATP + NADPH + H(+). The protein operates within secondary metabolite biosynthesis. In terms of biological role, non-canonical nonribosomal peptide synthetase; part of the lnb gene cluster that mediates the biosynthesis of diastereomeric piperazines. Lna and lnb clusters encode sets of enzymes that produce overlapping sets of previously undescribed metabolites such as piperazinomycin-like metabolites or morpholine. The lna and lnb biosynthetic pathways appear to be part of a signaling network that controls the formation of sclerotia, a resilient overwintering structure. One primary function of the non-canonical nonribosomal peptide synthetases lnaA and lnbA consists in the reduction of L-tyrosine. The presence in the clusters of tailoring enzymes such as the oxidoreductases lnaB, lnbB, lnaE or lnbE, as well as of the cytochrome P450 monooxygenases lnaC, lnaD, or lnbC, might explain formation of various diastereomeric piperazines. This Aspergillus flavus (strain ATCC 200026 / FGSC A1120 / IAM 13836 / NRRL 3357 / JCM 12722 / SRRC 167) protein is Aldehyde reductase lnbA.